A 771-amino-acid polypeptide reads, in one-letter code: Myotubularin-related protein 10 (771 aa).

In terms of domain architecture, Myotubularin phosphatase spans 217–657; the sequence is FETYSDWDRE…THIKLWKLCY (441 aa). Phosphoserine occurs at positions 603 and 745.

This sequence belongs to the protein-tyrosine phosphatase family. Non-receptor class myotubularin subfamily.

This chain is Myotubularin-related protein 10 (Mtmr10), found in Mus musculus (Mouse).